A 177-amino-acid polypeptide reads, in one-letter code: Large ribosomal subunit protein uL6 (177 aa).

It belongs to the universal ribosomal protein uL6 family. In terms of assembly, part of the 50S ribosomal subunit.

This protein binds to the 23S rRNA, and is important in its secondary structure. It is located near the subunit interface in the base of the L7/L12 stalk, and near the tRNA binding site of the peptidyltransferase center. The protein is Large ribosomal subunit protein uL6 of Proteus mirabilis (strain HI4320).